The sequence spans 202 residues: Small ribosomal subunit protein uS4 (202 aa).

The tract at residues 18-44 is disordered; it reads LPGLTRKSARREYPPGQHGQGRRKRSE. Residues 90–152 form the S4 RNA-binding domain; the sequence is MRLDNTVFRL…DRSRKLIEAN (63 aa).

This sequence belongs to the universal ribosomal protein uS4 family. Part of the 30S ribosomal subunit. Contacts protein S5. The interaction surface between S4 and S5 is involved in control of translational fidelity.

Functionally, one of the primary rRNA binding proteins, it binds directly to 16S rRNA where it nucleates assembly of the body of the 30S subunit. In terms of biological role, with S5 and S12 plays an important role in translational accuracy. In Picosynechococcus sp. (strain ATCC 27264 / PCC 7002 / PR-6) (Agmenellum quadruplicatum), this protein is Small ribosomal subunit protein uS4.